Reading from the N-terminus, the 130-residue chain is Small ribosomal subunit protein uS8A (130 aa).

This sequence belongs to the universal ribosomal protein uS8 family. Component of the small ribosomal subunit (SSU). Mature ribosomes consist of a small (40S) and a large (60S) subunit. The 40S subunit contains about 32 different proteins and 1 molecule of RNA (18S). The 60S subunit contains 45 different proteins and 3 molecules of RNA (25S, 5.8S and 5S).

It localises to the cytoplasm. Component of the ribosome, a large ribonucleoprotein complex responsible for the synthesis of proteins in the cell. The small ribosomal subunit (SSU) binds messenger RNAs (mRNAs) and translates the encoded message by selecting cognate aminoacyl-transfer RNA (tRNA) molecules. The large subunit (LSU) contains the ribosomal catalytic site termed the peptidyl transferase center (PTC), which catalyzes the formation of peptide bonds, thereby polymerizing the amino acids delivered by tRNAs into a polypeptide chain. The nascent polypeptides leave the ribosome through a tunnel in the LSU and interact with protein factors that function in enzymatic processing, targeting, and the membrane insertion of nascent chains at the exit of the ribosomal tunnel. This Candida albicans (strain SC5314 / ATCC MYA-2876) (Yeast) protein is Small ribosomal subunit protein uS8A (RPS22A).